A 595-amino-acid polypeptide reads, in one-letter code: UvrABC system protein C (595 aa).

Residues 14–91 (NNPGCYLHKD…IQENMPKFNI (78 aa)) enclose the GIY-YIG domain. The 36-residue stretch at 196–231 (DKIVNQLKAKMKDMSDQMEFERAAEYRDLIEAVSTL) folds into the UVR domain.

This sequence belongs to the UvrC family. Interacts with UvrB in an incision complex.

It localises to the cytoplasm. In terms of biological role, the UvrABC repair system catalyzes the recognition and processing of DNA lesions. UvrC both incises the 5' and 3' sides of the lesion. The N-terminal half is responsible for the 3' incision and the C-terminal half is responsible for the 5' incision. The protein is UvrABC system protein C of Streptococcus thermophilus (strain ATCC BAA-250 / LMG 18311).